The primary structure comprises 131 residues: Translation initiation factor 5A (131 aa).

The residue at position 36 (Lys-36) is a Hypusine.

This sequence belongs to the eIF-5A family.

It localises to the cytoplasm. In terms of biological role, functions by promoting the formation of the first peptide bond. This chain is Translation initiation factor 5A, found in Saccharolobus solfataricus (strain ATCC 35092 / DSM 1617 / JCM 11322 / P2) (Sulfolobus solfataricus).